The following is a 362-amino-acid chain: Replication-associated protein (362 aa).

One can recognise a CRESS-DNA virus Rep endonuclease domain in the interval R8–F116. The RCR-1 signature appears at F15–Y18. The a divalent metal cation site is built by E49, H57, and H59. An RCR-2 motif is present at residues H57–H59. Y103 acts as the For DNA cleavage activity in catalysis. The RCR-3 signature appears at Y103 to K106. Residue D107 participates in a divalent metal cation binding. The segment at K143–L153 is binding to RBR1. Residues K156 to P176 form an oligomerization region. G221–T228 lines the ATP pocket. The segment at Y341–N362 is disordered. Acidic residues predominate over residues S352–N362.

This sequence belongs to the geminiviridae Rep protein family. In terms of assembly, homooligomer. Interacts with the replication enhancer protein (REn). Interacts with host retinoblastoma-related protein 1 (RBR1), and may thereby induce the transcription of host replicative enzymes even if the cell is not dividing anymore. Interacts with host PCNA. Interacts with host SCE1 protein. Binds to host RAD54 protein to ensure geminiviral replication. The cofactor is Mg(2+). Mn(2+) serves as cofactor.

It localises to the host nucleus. Functionally, essential for the replication of viral ssDNA. The closed circular ssDNA genome is first converted to a superhelical dsDNA. Rep binds a specific region at the genome origin of replication. It introduces an endonucleolytic nick within the conserved sequence 5'-TAATATTAC-3' in the intergenic region of the genome present in all geminiviruses, thereby initiating the rolling circle replication (RCR). Following cleavage, binds covalently to the 5'-phosphate of DNA as a tyrosyl ester. The cleavage gives rise to a free 3'-OH that serves as a primer for the cellular DNA polymerase. The polymerase synthesizes the (+) strand DNA by rolling circle mechanism. After one round of replication, a Rep-catalyzed nucleotidyl transfer reaction releases a circular single-stranded virus genome, thereby terminating the replication. Displays origin-specific DNA cleavage, nucleotidyl transferase, ATPase and helicase activities. This chain is Replication-associated protein, found in Cynanchum acutum (Little mallow).